A 790-amino-acid polypeptide reads, in one-letter code: MKITSTSCICPVLVCLCFVQRCYGTAHHSSIKVMRNQTKHIEGETEVHHRPKRGWVWNQFFVLEEHMGPDPQYVGKLHSNSDKGDGSVKYILTGEGAGTIFIIDDTTGDIHSTKSLDREQKTHYVLHAQAIDRRTNKPLEPESEFIIKVQDINDNAPKFTDGPYIVTVPEMSDMGTSVLQVTATDADDPTYGNSARVVYSILQGQPYFSVDPKTGVIRTALHNMDREAREHYSVVIQAKDMAGQVGGLSGSTTVNITLTDVNDNPPRFPQKHYQLYVPESAQVGSAVGKIKANDADTGSNADMTYSIINGDGMGIFSISTDKETREGILSLKKPLNYEKKKSYTLNIEGANTHLDFRFSHLGPFKDATMLKIIVGDVDEPPLFSMPSYLMEVYENAKIGTVVGTVLAQDPDSTNSLVRYFINYNVEDDRFFNIDANTGTIRTTKVLDREETPWYNITVTASEIDNPDLLSHVTVGIRVLDVNDNPPELAREYDIIVCENSKPGQVIHTISATDKDDFANGPRFNFFLDERLPVNPNFTLKDNEDNTASILTRRRRFSRTVQDVYYLPIMISDGGIPSLSSSSTLTIRVCACERDGRVRTCHAEAFLSSAGLSTGALIAILLCVLILLAIVVLFITLRRSKKEPLIISEEDVRENVVTYDDEGGGEEDTEAFDITALRNPSAAEELKYRRDIRPEVKLTPRHQTSSTLESIDVQEFIKQRLAEADLDPSVPPYDSLQTYAYEGQRSEAGSISSLDSATTQSDQDYHYLGDWGPEFKKLAELYGEIESERTT.

An N-terminal signal peptide occupies residues 1–24 (MKITSTSCICPVLVCLCFVQRCYG). A propeptide spanning residues 25-53 (TAHHSSIKVMRNQTKHIEGETEVHHRPKR) is cleaved from the precursor. Asn-36 carries N-linked (GlcNAc...) asparagine glycosylation. Cadherin domains lie at 54–159 (GWVW…APKF), 160–268 (TDGP…PPRF), 269–383 (PQKH…PPLF), 384–486 (SMPS…DNPP), and 487–608 (ELAR…FLSS). The Extracellular portion of the chain corresponds to 54 to 608 (GWVWNQFFVL…TCHAEAFLSS (555 aa)). An N-linked (GlcNAc...) asparagine glycan is attached at Asn-255. 2 N-linked (GlcNAc...) asparagine glycosylation sites follow: Asn-455 and Asn-536. The helical transmembrane segment at 609 to 636 (AGLSTGALIAILLCVLILLAIVVLFITL) threads the bilayer. Residues 637–790 (RRSKKEPLII…YGEIESERTT (154 aa)) lie on the Cytoplasmic side of the membrane. A Phosphoserine modification is found at Ser-786.

Its subcellular location is the cell membrane. In terms of biological role, cadherins are calcium-dependent cell adhesion proteins. They preferentially interact with themselves in a homophilic manner in connecting cells; cadherins may thus contribute to the sorting of heterogeneous cell types. This Homo sapiens (Human) protein is Cadherin-18 (CDH18).